The following is a 212-amino-acid chain: Placenta-specific protein 1 (212 aa).

A signal peptide spans 1–22 (MKVFKFIGLMILLTSAFSAGSG).

This sequence belongs to the PLAC1 family. In terms of tissue distribution, expressed in placenta. Localizes primarily to differentiated syncytiotrophoblast throughout gestation as well as to a small population of villous cytotrophoblasts. Also detected in maternal blood and rapidly disappears following delivery, but is not detected in other adult or fetal tissues examined.

Its subcellular location is the secreted. Functionally, may play a role in placental development. The polypeptide is Placenta-specific protein 1 (Homo sapiens (Human)).